Reading from the N-terminus, the 156-residue chain is MPRRRIIGTRKILPDPKFSSELLAKFINILMIDGKKSIAEVIVYTALKNLSKRTDKKELEAFEIALENVRPTVEVKSRRVGGSTYQVPVEVRPVRRNALAMRWIVESARKRVDKSMSLRLSNELYDALENKGTAVKKREEVHRMAEANKAFAHYRW.

The protein belongs to the universal ribosomal protein uS7 family. In terms of assembly, part of the 30S ribosomal subunit. Contacts proteins S9 and S11.

In terms of biological role, one of the primary rRNA binding proteins, it binds directly to 16S rRNA where it nucleates assembly of the head domain of the 30S subunit. Is located at the subunit interface close to the decoding center, probably blocks exit of the E-site tRNA. The sequence is that of Small ribosomal subunit protein uS7 from Buchnera aphidicola subsp. Acyrthosiphon pisum (strain Tuc7).